The primary structure comprises 349 residues: Phenylalanine--tRNA ligase alpha subunit (349 aa).

Mg(2+) is bound at residue Glu-261.

The protein belongs to the class-II aminoacyl-tRNA synthetase family. Phe-tRNA synthetase alpha subunit type 1 subfamily. As to quaternary structure, tetramer of two alpha and two beta subunits. Requires Mg(2+) as cofactor.

It localises to the cytoplasm. It catalyses the reaction tRNA(Phe) + L-phenylalanine + ATP = L-phenylalanyl-tRNA(Phe) + AMP + diphosphate + H(+). The sequence is that of Phenylalanine--tRNA ligase alpha subunit from Leuconostoc citreum (strain KM20).